The following is a 319-amino-acid chain: Aliphatic sulfonates import ATP-binding protein SsuB (319 aa).

The 220-residue stretch at 63 to 282 folds into the ABC transporter domain; that stretch reads VTLSGVSKRF…ARASAAFAAL (220 aa). 95–102 is a binding site for ATP; that stretch reads GRSGCGKS.

This sequence belongs to the ABC transporter superfamily. Aliphatic sulfonates importer (TC 3.A.1.17.2) family. As to quaternary structure, the complex is composed of two ATP-binding proteins (SsuB), two transmembrane proteins (SsuC) and a solute-binding protein (SsuA).

The protein resides in the cell inner membrane. It catalyses the reaction ATP + H2O + aliphatic sulfonate-[sulfonate-binding protein]Side 1 = ADP + phosphate + aliphatic sulfonateSide 2 + [sulfonate-binding protein]Side 1.. Part of the ABC transporter complex SsuABC involved in aliphatic sulfonates import. Responsible for energy coupling to the transport system. In Burkholderia ambifaria (strain ATCC BAA-244 / DSM 16087 / CCUG 44356 / LMG 19182 / AMMD) (Burkholderia cepacia (strain AMMD)), this protein is Aliphatic sulfonates import ATP-binding protein SsuB.